The sequence spans 386 residues: Innexin unc-9 (386 aa).

4 consecutive transmembrane segments (helical) span residues 33–53 (TAII…GFPI), 103–123 (QWVP…TIVW), 197–217 (FLYI…IFLL), and 282–302 (IFLF…CSLF).

The protein belongs to the pannexin family. Heterooligomer of unc-7 and unc-9. Interacts with F-actin. In terms of tissue distribution, expressed in PLM neurons (at protein level). Expressed in the nerve ring.

It is found in the cell membrane. The protein resides in the cell junction. It localises to the gap junction. Its function is as follows. Structural component of gap junctions. Plays a role in maintaining gap junction activity to promote locomotion. The chain is Innexin unc-9 from Caenorhabditis elegans.